A 1792-amino-acid chain; its full sequence is Eukaryotic translation initiation factor 4G (1792 aa).

Basic and acidic residues predominate over residues 1-12 (MSQRGDRGEGHA). 11 disordered regions span residues 1-285 (MSQR…PRPP), 424-446 (DSSG…TYGS), 491-590 (SPSM…PTPV), 612-659 (NSVP…EDLK), 678-761 (GVNK…NESH), 874-912 (VASE…EITR), 960-993 (SSSI…LDDW), 999-1018 (MSTP…EANG), 1275-1299 (GERE…EERE), 1407-1503 (WQQR…HRTT), and 1537-1600 (ELSS…KLYS). Positions 21-42 (FGGGHRGGGGVGGAGKGGGGSS) are enriched in gly residues. Residues 88–107 (PLRPPAPQNAPAHVPVPAPR) are compositionally biased toward pro residues. Polar residues-rich tracts occupy residues 147 to 156 (RISSTSTSQG) and 179 to 191 (STMQ…SSAP). Low complexity-rich tracts occupy residues 216-243 (PQAP…PLQQ), 263-278 (PSQV…SVPN), and 432-442 (PSVQQQSQPVS). Residues 491–517 (SPSMNTGPGSNKDNLAGSTTSGHSQVT) show a composition bias toward polar residues. 3 stretches are compositionally biased toward basic and acidic residues: residues 545-564 (DVNK…KDNE), 571-587 (KSGE…EKHP), and 633-643 (DSNKNATKDTR). Polar residues predominate over residues 644-654 (NLSQEPQSASS). Positions 699-718 (AADASSIDRSSARSTSESTE) are enriched in low complexity. The segment covering 964-990 (ADHELPDESSEKEVNMGEDEGKKKVEL) has biased composition (basic and acidic residues). Residues 1018–1030 (GRKRYSRDFLLTL) are EIF4E-binding. The MIF4G domain occupies 1183–1406 (QRQLKAILNK…RDSIDLRKNK (224 aa)). Residues 1278–1289 (EEAEADKTEEEG) show a composition bias toward acidic residues. Basic and acidic residues-rich tracts occupy residues 1290-1299 (EIKQTKEERE) and 1411-1432 (RKVE…ERHA). 2 stretches are compositionally biased toward low complexity: residues 1439-1450 (RGSVVGSGPRRG) and 1461-1470 (SAAALASPSS). Composition is skewed to basic and acidic residues over residues 1490–1503 (IRFE…HRTT) and 1559–1572 (AREE…DRSG). Polar residues predominate over residues 1576–1593 (PNTQFAGPSNRPASQEGR). One can recognise an MI domain in the interval 1603–1727 (DLREKSISAI…SLQEVGTLIE (125 aa)).

The protein belongs to the eukaryotic initiation factor 4G family. As to quaternary structure, EIF4F is a multi-subunit complex, the composition of which varies with external and internal environmental conditions. It is composed of at least EIF4A, EIF4E and EIF4G. In higher plants two isoforms of EIF4F have been identified, named isoform EIF4F and isoform EIF(iso)4F. Isoform EIF4F has subunits p220 and p26, whereas isoform EIF(iso)4F has subunits p82 and p28.

Its function is as follows. Component of the protein complex eIF4F, which is involved in the recognition of the mRNA cap, ATP-dependent unwinding of 5'-terminal secondary structure and recruitment of mRNA to the ribosome. This chain is Eukaryotic translation initiation factor 4G, found in Oryza sativa subsp. japonica (Rice).